A 514-amino-acid polypeptide reads, in one-letter code: Peptide chain release factor 3 (514 aa).

The region spanning 8–268 (KKRRTFAIIS…TFLKFAPEPH (261 aa)) is the tr-type G domain. GTP-binding positions include 17-24 (SHPDAGKT), 85-89 (DTPGH), and 139-142 (NKLD).

The protein belongs to the TRAFAC class translation factor GTPase superfamily. Classic translation factor GTPase family. PrfC subfamily.

It is found in the cytoplasm. Increases the formation of ribosomal termination complexes and stimulates activities of RF-1 and RF-2. It binds guanine nucleotides and has strong preference for UGA stop codons. It may interact directly with the ribosome. The stimulation of RF-1 and RF-2 is significantly reduced by GTP and GDP, but not by GMP. The protein is Peptide chain release factor 3 of Streptococcus sanguinis (strain SK36).